The sequence spans 448 residues: Probable sodium-coupled neutral amino acid transporter 6 (448 aa).

Composition is skewed to polar residues over residues 1–12 and 26–36; these read MQASDSSINTLD and LLANSPQRRSS. The disordered stretch occupies residues 1–36; it reads MQASDSSINTLDGHQVSAGRDESTPLLANSPQRRSS. Helical transmembrane passes span 40–60, 69–89, 117–137, 164–184, and 185–205; these read SFGF…ILGL, ILGF…SIHL, LVAC…LFII, LLII…KIGF, and LGYT…VIVI. A disulfide bridge links C212 with C232. N218 and N228 each carry an N-linked (GlcNAc...) asparagine glycan. The next 6 membrane-spanning stretches (helical) occupy residues 244–264, 281–301, 321–341, 365–385, 388–408, and 425–445; these read AFAL…LPIY, VGIA…YLTF, VLII…VPLI, ILVT…VPDM, VFGV…PGLF, and ACGL…LIIM.

The protein belongs to the amino acid/polyamine transporter 2 family.

The protein resides in the cell membrane. Its function is as follows. Probable sodium-dependent amino acid/proton antiporter, could be a neuronal transporter for glutamate. This Xenopus tropicalis (Western clawed frog) protein is Probable sodium-coupled neutral amino acid transporter 6 (slc38a6).